The chain runs to 810 residues: Leucine--tRNA ligase (810 aa).

A 'HIGH' region motif is present at residues 43-53; the sequence is PYPSGTLHIGH. The 'KMSKS' region signature appears at 578 to 582; sequence KMSKS. Lysine 581 provides a ligand contact to ATP.

The protein belongs to the class-I aminoacyl-tRNA synthetase family.

It is found in the cytoplasm. The catalysed reaction is tRNA(Leu) + L-leucine + ATP = L-leucyl-tRNA(Leu) + AMP + diphosphate. The protein is Leucine--tRNA ligase of Solibacter usitatus (strain Ellin6076).